The following is a 442-amino-acid chain: MSEIGSYHDTIFALSSGRLPSGVAVIRISGPKTRFVYETIRQAIPEPRHAALLTFRSRNGDAIDRGLTLFFPAPHSFTGEDCAEFHLHGGKAVVEKMLAVLGELPGCRIAEAGEFTRRAFANGKMDLTIAEGLADLIAAETEGQRRLAMQVASGNQRKLYSEWRQRLINARAFIEAELDFADESDVPGSVSMQVWQQLSALKHEIEHHIASGKRAAMLRDGLHVVIVGAPNAGKSSLLNFLAGRDVAIISEEAGTTRDLLEVKLDLGGIPVYVTDTAGLRETDSVVEKIGIERARARMAEADLVLSLEDMSGPVSVTVEKIEAETWLIGTKADLGGSASGLWKYHISTMTGSGLEQLLDALQAFAEAKIGQIEDAVPTRQRHINLLRATIEEIEKAIEGDDLPLELRAENMRLASQFLGRITGDVDVEEILDVIFSQFCIGK.

Arginine 27, glutamate 84, and lysine 124 together coordinate (6S)-5-formyl-5,6,7,8-tetrahydrofolate. One can recognise a TrmE-type G domain in the interval 221–366 (GLHVVIVGAP…LLDALQAFAE (146 aa)). GTP-binding positions include 231 to 236 (NAGKSS), 250 to 256 (SEEAGTT), and 275 to 278 (DTAG). Serine 235 and threonine 256 together coordinate Mg(2+). Lysine 442 contributes to the (6S)-5-formyl-5,6,7,8-tetrahydrofolate binding site.

It belongs to the TRAFAC class TrmE-Era-EngA-EngB-Septin-like GTPase superfamily. TrmE GTPase family. As to quaternary structure, homodimer. Heterotetramer of two MnmE and two MnmG subunits. It depends on K(+) as a cofactor.

Its subcellular location is the cytoplasm. Exhibits a very high intrinsic GTPase hydrolysis rate. Involved in the addition of a carboxymethylaminomethyl (cmnm) group at the wobble position (U34) of certain tRNAs, forming tRNA-cmnm(5)s(2)U34. This is tRNA modification GTPase MnmE from Brucella ovis (strain ATCC 25840 / 63/290 / NCTC 10512).